A 571-amino-acid chain; its full sequence is Glutamine--tRNA ligase (571 aa).

Residues 35 to 45 (PEPNGYLHIGH) carry the 'HIGH' region motif. ATP is bound by residues 36 to 38 (EPN) and 42 to 48 (HIGHAKS). L-glutamine is bound by residues D68 and Y213. ATP-binding positions include T232, 262–263 (RL), and 270–272 (LSK). The 'KMSKS' region motif lies at 269 to 273 (ILSKR).

This sequence belongs to the class-I aminoacyl-tRNA synthetase family. Monomer.

Its subcellular location is the cytoplasm. The catalysed reaction is tRNA(Gln) + L-glutamine + ATP = L-glutaminyl-tRNA(Gln) + AMP + diphosphate. The sequence is that of Glutamine--tRNA ligase from Buchnera aphidicola subsp. Acyrthosiphon pisum (strain APS) (Acyrthosiphon pisum symbiotic bacterium).